The following is a 155-amino-acid chain: Endoribonuclease YbeY (155 aa).

Residues His-114, His-118, and His-124 each contribute to the Zn(2+) site.

The protein belongs to the endoribonuclease YbeY family. Zn(2+) is required as a cofactor.

It localises to the cytoplasm. Single strand-specific metallo-endoribonuclease involved in late-stage 70S ribosome quality control and in maturation of the 3' terminus of the 16S rRNA. In Enterobacter sp. (strain 638), this protein is Endoribonuclease YbeY.